The chain runs to 513 residues: Voltage-gated potassium channel regulatory subunit KCNG1 (513 aa).

Over 1 to 224 (MTLLPGDNSD…DMVERPHSGL (224 aa)) the chain is Cytoplasmic. A disordered region spans residues 184–204 (EEDDALDSEGRDSEGPAEGEG). Over residues 191–204 (SEGRDSEGPAEGEG) the composition is skewed to basic and acidic residues. The helical transmembrane segment at 225–246 (PGKVFACLSVLFVTVTAVNLSV) threads the bilayer. Residues 247 to 267 (STLPSLREEEEQGHCSQMCHN) lie on the Extracellular side of the membrane. Residues 268–289 (VFIVESVCVGWFSLEFLLRLIQ) traverse the membrane as a helical segment. Over 290-300 (APSKFAFLRSP) the chain is Cytoplasmic. The chain crosses the membrane as a helical span at residues 301–321 (LTLIDLVAILPYYITLLVDGA). The Extracellular segment spans residues 322-338 (AAGRRKPGAGNSYLDKV). Residues 339–359 (GLVLRVLRALRILYVMRLARH) traverse the membrane as a helical; Voltage-sensor segment. Residues 360–374 (SLGLQTLGLTARRCT) are Cytoplasmic-facing. A helical transmembrane segment spans residues 375 to 396 (REFGLLLLFLCVAIALFAPLLY). Residues 397–411 (VIENEMADSPEFTSI) lie on the Extracellular side of the membrane. Residues 412–423 (PACYWWAVITMT) constitute an intramembrane region (helical). A Selectivity filter motif is present at residues 424-429 (TVGYGD). Residues 424-431 (TVGYGDMV) lie within the membrane without spanning it. Over 432–438 (PRSTPGQ) the chain is Extracellular. The chain crosses the membrane as a helical span at residues 439-467 (VVALSSILSGILLMAFPVTSIFHTFSRSY). Residues 468 to 513 (LELKQEQERVMFRRAQFLIKTKSQLSVSQDSDILFGSASSDTRDNN) lie on the Cytoplasmic side of the membrane.

This sequence belongs to the potassium channel family. G (TC 1.A.1.2) subfamily. Kv6.1/KCNG1 sub-subfamily. Heterotetramer with KCNB1. Heterotetramer with KCNB2. In terms of tissue distribution, expressed in brain and placenta, and at much lower levels in kidney and pancreas.

It localises to the cell membrane. In terms of biological role, regulatory alpha-subunit of the voltage-gated potassium (Kv) channel which, when coassembled with KCNB1 or KCNB2, can modulate their expression and their gating kinetics by acting on deactivation upon repolarization and inactivation during maintained depolarization. Potassium channel subunit that does not form functional channels by itself. This chain is Voltage-gated potassium channel regulatory subunit KCNG1, found in Homo sapiens (Human).